The chain runs to 404 residues: Glucoside xylosyltransferase 1 (404 aa).

Residues 1–6 are Cytoplasmic-facing; it reads MRRYLR. Residues 7–29 traverse the membrane as a helical; Signal-anchor for type II membrane protein segment; that stretch reads VVGLCLACGFCSLLYAFSQLAVS. Over 30–404 the chain is Lumenal; sequence LEEGAAGGRR…NRYDTPPKER (375 aa). A glycan (N-linked (GlcNAc...) asparagine) is linked at N201.

The protein belongs to the glycosyltransferase 8 family.

It is found in the membrane. The enzyme catalyses 3-O-(beta-D-glucosyl)-L-seryl-[EGF-like domain protein] + UDP-alpha-D-xylose = 3-O-[alpha-D-xylosyl-(1-&gt;3)-beta-D-glucosyl]-L-seryl-[EGF-like domain protein] + UDP + H(+). Functionally, glycosyltransferase which elongates the O-linked glucose attached to EGF-like repeats in the extracellular domain of Notch proteins by catalyzing the addition of xylose. In Mus musculus (Mouse), this protein is Glucoside xylosyltransferase 1 (Gxylt1).